The primary structure comprises 388 residues: S-adenosylmethionine synthase (388 aa).

H17 is an ATP binding site. D19 is a Mg(2+) binding site. E45 contributes to the K(+) binding site. E58 and Q106 together coordinate L-methionine. Residues 106-116 (QSAHIAQGVDK) form a flexible loop region. ATP contacts are provided by residues 166 to 168 (DAK), D241, 247 to 248 (RK), A264, and K268. An L-methionine-binding site is contributed by D241. Residue K272 coordinates L-methionine.

The protein belongs to the AdoMet synthase family. As to quaternary structure, homotetramer; dimer of dimers. Mg(2+) is required as a cofactor. K(+) serves as cofactor.

Its subcellular location is the cytoplasm. It catalyses the reaction L-methionine + ATP + H2O = S-adenosyl-L-methionine + phosphate + diphosphate. It functions in the pathway amino-acid biosynthesis; S-adenosyl-L-methionine biosynthesis; S-adenosyl-L-methionine from L-methionine: step 1/1. Functionally, catalyzes the formation of S-adenosylmethionine (AdoMet) from methionine and ATP. The overall synthetic reaction is composed of two sequential steps, AdoMet formation and the subsequent tripolyphosphate hydrolysis which occurs prior to release of AdoMet from the enzyme. This is S-adenosylmethionine synthase from Cereibacter sphaeroides (strain ATCC 17023 / DSM 158 / JCM 6121 / CCUG 31486 / LMG 2827 / NBRC 12203 / NCIMB 8253 / ATH 2.4.1.) (Rhodobacter sphaeroides).